Reading from the N-terminus, the 20-residue chain is Manganese peroxidase H5 (20 aa).

This sequence belongs to the peroxidase family. Ligninase subfamily.

The protein localises to the secreted. The catalysed reaction is 2 Mn(2+) + H2O2 + 2 H(+) = 2 Mn(3+) + 2 H2O. Catalyzes the oxidation of Mn(2+) to Mn(3+). The latter, acting as a diffusible redox mediator, is capable of oxidizing a variety of lignin compounds. In Phanerodontia chrysosporium (White-rot fungus), this protein is Manganese peroxidase H5.